The sequence spans 142 residues: Hemoglobin subunit alpha-A (142 aa).

The region spanning 2-142 (VLSAADKGNV…VATVLTAKYR (141 aa)) is the Globin domain. O2 is bound at residue His59. Heme b is bound at residue His88.

This sequence belongs to the globin family. As to quaternary structure, heterotetramer of two alpha chains and two beta chains. As to expression, red blood cells.

Its function is as follows. Involved in oxygen transport from the lung to the various peripheral tissues. The polypeptide is Hemoglobin subunit alpha-A (HBAA) (Anseranas semipalmata (Magpie goose)).